Here is a 2202-residue protein sequence, read N- to C-terminus: Nonribosomal peptide synthetase 5 (2202 aa).

Residues 58–443 (TYAQLDALSD…LLSYDKVDSA (386 aa)) are adenylation 1. The Carrier 1 domain occupies 517 to 593 (ERGLGAVESV…NIAAAVVELS (77 aa)). Serine 554 bears the O-(pantetheine 4'-phosphoryl)serine mark. Residues 625-918 (IAPMTDMQTR…INTLPLAINT (294 aa)) form a condensation 1 region. Residues 1105-1482 (TYREFGRMTE…EVQSTISKLA (378 aa)) are adenylation 2. The 81-residue stretch at 1563–1643 (DLETDTQRVL…DLSLAIDELV (81 aa)) folds into the Carrier 2 domain. O-(pantetheine 4'-phosphoryl)serine is present on serine 1602. The condensation 2 stretch occupies residues 1664–1952 (GQLPLSYLEK…FLDRLLLRIQ (289 aa)). A disordered region spans residues 2103–2129 (PVGLTPSHEGSAELTNGTNKTDSTTGQ). The span at 2115-2129 (ELTNGTNKTDSTTGQ) shows a compositional bias: polar residues. In terms of domain architecture, Carrier 3 spans 2130–2202 (QELENNLTDV…LELATCAVII (73 aa)). Position 2164 is an O-(pantetheine 4'-phosphoryl)serine (serine 2164).

It belongs to the NRP synthetase family.

Its function is as follows. Nonribosomal peptide synthesis (NRPS) is a key mechanism responsible for the biosynthesis of bioactive metabolites which are potentially contributing to organismal virulence. This is Nonribosomal peptide synthetase 5 (NRPS5) from Aspergillus fumigatus (strain ATCC MYA-4609 / CBS 101355 / FGSC A1100 / Af293) (Neosartorya fumigata).